The sequence spans 112 residues: 2Fe-2S ferredoxin (112 aa).

The 2Fe-2S ferredoxin-type domain maps to Ile-5 to Thr-107. Cys-42, Cys-48, Cys-51, and Cys-88 together coordinate [2Fe-2S] cluster.

The protein belongs to the adrenodoxin/putidaredoxin family. Requires [2Fe-2S] cluster as cofactor.

Its function is as follows. Ferredoxin are iron-sulfur proteins that transfer electrons in a wide variety of metabolic reactions. The protein is 2Fe-2S ferredoxin (fdxB) of Rickettsia rickettsii.